We begin with the raw amino-acid sequence, 286 residues long: Beta-lactamase SHV-2 (286 aa).

The signal sequence occupies residues 1-21; sequence MRYIRLCIISLLATLPLAVHA. Ser66 (acyl-ester intermediate) is an active-site residue. A disulfide bridge links Cys73 with Cys119. Residue Glu164 is the Proton acceptor of the active site. 230 to 232 serves as a coordination point for substrate; it reads KTG.

It belongs to the class-A beta-lactamase family.

The catalysed reaction is a beta-lactam + H2O = a substituted beta-amino acid. Its function is as follows. This enzyme hydrolyzes cefotaxime, ceftazidime and other broad spectrum cephalosporins. The protein is Beta-lactamase SHV-2 (bla) of Escherichia coli.